Reading from the N-terminus, the 361-residue chain is Thermostable alkaline protease (361 aa).

Positions 1-24 are cleaved as a signal peptide; that stretch reads MRQSLKVMVLSTVALLFMANPAAA. Residues 25 to 93 constitute a propeptide that is removed on maturation; the sequence is SEEKKEYLIV…IEKNAEVTIS (69 aa). Q94 serves as a coordination point for Ca(2+). In terms of domain architecture, Peptidase S8 spans 97 to 360; it reads PWGISFINTQ…NGLVHAGRAT (264 aa). D124 (charge relay system) is an active-site residue. D132 contributes to the Ca(2+) binding site. The active-site Charge relay system is the H154. Positions 165, 167, 169, 171, 255, 257, and 260 each coordinate Ca(2+). Catalysis depends on S307, which acts as the Charge relay system.

This sequence belongs to the peptidase S8 family. It depends on Ca(2+) as a cofactor.

Its subcellular location is the secreted. Shows keratinolytic activity. This Halalkalibacterium halodurans (strain ATCC BAA-125 / DSM 18197 / FERM 7344 / JCM 9153 / C-125) (Bacillus halodurans) protein is Thermostable alkaline protease.